A 493-amino-acid polypeptide reads, in one-letter code: Leucine-rich repeat-containing protein 14 (493 aa).

An LRR 1; degenerate repeat occupies 111–146 (KHTLRVLDMTGLLDDGVEQDPGTMSMWDCTAAVART). The LRR 2; degenerate repeat unit spans residues 194-218 (RLCCRDLRAEDLPMRNTVALLQLLD). Residues 219 to 246 (AGCLRRIDLRFNNLGLRGLSVIIPHVAR) form an LRR 3; degenerate repeat. An LRR 4; degenerate repeat occupies 247–282 (FQHLASLRLHYVHGDSRQPSVDGEDNFRYFLAQMGR). LRR repeat units lie at residues 283–307 (FICL…LSTL), 308–339 (QRPL…AHLK), 340–360 (KLDL…QGLL), 364–391 (AATL…TLTR), and 392–416 (CASL…LLRD).

The protein belongs to the PRAME family. LRRC14 subfamily. In terms of assembly, interacts with IKBKB; disrupts IKBKB-IKBKG interaction preventing I-kappa-B-kinase (IKK) core complex formation and leading to a decrease of IKBKB phosphorylation and NF-kappaB activation. Interacts with CHUK.

It localises to the cytoplasm. In terms of biological role, negatively regulates Toll-like receptor-mediated NF-kappa-B signaling by disrupting IKK core complex formation through interaction with IKBKB. The sequence is that of Leucine-rich repeat-containing protein 14 from Rattus norvegicus (Rat).